Consider the following 361-residue polypeptide: G kinase-anchoring protein 1-A (361 aa).

Disordered stretches follow at residues 22–111 and 140–183; these read DSSS…EDWQ and FEES…KDFQ. A compositionally biased stretch (low complexity) spans 35 to 48; that stretch reads AHSSGKAHSGSAAR. Positions 51–79 form a coiled coil; it reads NKGNEKKKEKRRKKKEQQQSEANELRNLA. A compositionally biased stretch (basic residues) spans 158–168; sequence KVNKKDKRKNN. Coiled coils occupy residues 246–296 and 326–346; these read KDGR…QEGE and AALE…VKYQ.

It belongs to the GKAP1 family.

Its subcellular location is the golgi apparatus. May play a role in the regulation of insulin-dependent IRS1 tyrosine phosphorylation in adipocytes. The chain is G kinase-anchoring protein 1-A (gkap1-a) from Xenopus laevis (African clawed frog).